The primary structure comprises 331 residues: 6-phosphogluconolactonase (331 aa).

Lys287 carries the N6-acetyllysine modification.

This sequence belongs to the cycloisomerase 2 family.

The enzyme catalyses 6-phospho-D-glucono-1,5-lactone + H2O = 6-phospho-D-gluconate + H(+). It participates in carbohydrate degradation; pentose phosphate pathway; D-ribulose 5-phosphate from D-glucose 6-phosphate (oxidative stage): step 2/3. Functionally, catalyzes the hydrolysis of 6-phosphogluconolactone to 6-phosphogluconate. This is 6-phosphogluconolactonase from Shigella boydii serotype 18 (strain CDC 3083-94 / BS512).